The following is a 111-amino-acid chain: Cell cycle protein GpsB (111 aa).

Residues 38–72 (IKDYEAFHKEFEQLKQQNARLKRELEEQKLAVTQV) are a coiled coil.

The protein belongs to the GpsB family. As to quaternary structure, forms polymers through the coiled coil domains. Interacts with PBP1, MreC and EzrA.

Its subcellular location is the cytoplasm. Functionally, divisome component that associates with the complex late in its assembly, after the Z-ring is formed, and is dependent on DivIC and PBP2B for its recruitment to the divisome. Together with EzrA, is a key component of the system that regulates PBP1 localization during cell cycle progression. Its main role could be the removal of PBP1 from the cell pole after pole maturation is completed. Also contributes to the recruitment of PBP1 to the division complex. Not essential for septum formation. The sequence is that of Cell cycle protein GpsB from Bacillus cereus (strain G9842).